The chain runs to 326 residues: Malate dehydrogenase (326 aa).

11–17 (GAAGQIG) contributes to the NAD(+) binding site. Residues Arg92 and Arg98 each coordinate substrate. NAD(+) is bound by residues Asn105, Gln112, and 129-131 (VGN). Substrate is bound by residues Asn131 and Arg162. His187 serves as the catalytic Proton acceptor.

This sequence belongs to the LDH/MDH superfamily. MDH type 2 family.

It carries out the reaction (S)-malate + NAD(+) = oxaloacetate + NADH + H(+). Its function is as follows. Catalyzes the reversible oxidation of malate to oxaloacetate. The chain is Malate dehydrogenase from Halorhodospira halophila (strain DSM 244 / SL1) (Ectothiorhodospira halophila (strain DSM 244 / SL1)).